The sequence spans 287 residues: 4-hydroxybenzoate octaprenyltransferase (287 aa).

The next 6 membrane-spanning stretches (helical) occupy residues 41–61 (WPLLVIFTLGTLLMRSAGCAM), 89–109 (WEAVAIAVGLSFIAFLLILPL), 133–153 (FFAIPQAYLGIAFGFGIPMAF), 158–178 (DTVPMLAWVMLVANIFWSVAY), 202–224 (FGRFDVAAVMACYAATLGIYVWI), and 266–286 (HNNWLGGVLFAGIAAHYLLAG).

Belongs to the UbiA prenyltransferase family. Mg(2+) serves as cofactor.

Its subcellular location is the cell inner membrane. The catalysed reaction is all-trans-octaprenyl diphosphate + 4-hydroxybenzoate = 4-hydroxy-3-(all-trans-octaprenyl)benzoate + diphosphate. The protein operates within cofactor biosynthesis; ubiquinone biosynthesis. In terms of biological role, catalyzes the prenylation of para-hydroxybenzoate (PHB) with an all-trans polyprenyl group. Mediates the second step in the final reaction sequence of ubiquinone-8 (UQ-8) biosynthesis, which is the condensation of the polyisoprenoid side chain with PHB, generating the first membrane-bound Q intermediate 3-octaprenyl-4-hydroxybenzoate. In Burkholderia cenocepacia (strain HI2424), this protein is 4-hydroxybenzoate octaprenyltransferase.